We begin with the raw amino-acid sequence, 248 residues long: Probable transcriptional regulatory protein R02753 (248 aa).

It belongs to the TACO1 family.

It is found in the cytoplasm. This is Probable transcriptional regulatory protein R02753 from Rhizobium meliloti (strain 1021) (Ensifer meliloti).